A 188-amino-acid chain; its full sequence is MKASEMKKGSIVEYSNGTYQIRDIQRSSPQGRGGNVRFRFVMYSVPGGSKLEASFDADEMLTAVELLRREASFSYKDGEAFVFLDEEDYTLYTLDAEAIGDNAGYISEGLSGCYVQLIDASPVALQLPQHVVLEVVDTPPELKGGTATKRPKPAKLITGIEVMVPEYITTGERILVNTTTGAFGGRAS.

It belongs to the elongation factor P family.

In Xylella fastidiosa (strain M23), this protein is Elongation factor P-like protein.